A 212-amino-acid polypeptide reads, in one-letter code: NADH dehydrogenase [ubiquinone] iron-sulfur protein 8, mitochondrial (212 aa).

The N-terminal 36 residues, 1 to 36 (MRCLTMPMLLRALAQAQAARAGHASVRGLHSSAVAA), are a transit peptide targeting the mitochondrion. 4Fe-4S ferredoxin-type domains lie at 104–133 (RRYP…IEAE) and 143–172 (TRYD…EGPN). Residues cysteine 113, cysteine 116, cysteine 119, cysteine 123, cysteine 152, cysteine 155, cysteine 158, and cysteine 162 each coordinate [4Fe-4S] cluster.

This sequence belongs to the complex I 23 kDa subunit family. As to quaternary structure, core subunit of respiratory chain NADH dehydrogenase (Complex I) which is composed of 45 different subunits. This is a component of the iron-sulfur (IP) fragment of the enzyme. Interacts with RAB5IF. The cofactor is [4Fe-4S] cluster.

It localises to the mitochondrion inner membrane. The catalysed reaction is a ubiquinone + NADH + 5 H(+)(in) = a ubiquinol + NAD(+) + 4 H(+)(out). Core subunit of the mitochondrial membrane respiratory chain NADH dehydrogenase (Complex I) which catalyzes electron transfer from NADH through the respiratory chain, using ubiquinone as an electron acceptor. Essential for the catalytic activity and assembly of complex I. The chain is NADH dehydrogenase [ubiquinone] iron-sulfur protein 8, mitochondrial (NDUFS8) from Bos taurus (Bovine).